Consider the following 436-residue polypeptide: GTPase Der (436 aa).

EngA-type G domains lie at 4–167 (PTVA…PTEA) and 175–351 (IKFS…QSQN). GTP-binding positions include 10–17 (GRPNVGKS), 57–61 (DTGGI), 119–122 (NKVD), 181–188 (GRPNVGKS), 229–233 (DTAGM), and 294–297 (NKWD). One can recognise a KH-like domain in the interval 352–436 (TRIPSAVLND…PIRLIARKRK (85 aa)).

Belongs to the TRAFAC class TrmE-Era-EngA-EngB-Septin-like GTPase superfamily. EngA (Der) GTPase family. In terms of assembly, associates with the 50S ribosomal subunit.

In terms of biological role, GTPase that plays an essential role in the late steps of ribosome biogenesis. The chain is GTPase Der from Streptococcus mutans serotype c (strain ATCC 700610 / UA159).